The following is a 167-amino-acid chain: NADH-quinone oxidoreductase subunit B 2 (167 aa).

Residues Cys38, Cys39, Cys103, and Cys132 each coordinate [4Fe-4S] cluster.

It belongs to the complex I 20 kDa subunit family. As to quaternary structure, NDH-1 is composed of 14 different subunits. Subunits NuoB, C, D, E, F, and G constitute the peripheral sector of the complex. [4Fe-4S] cluster serves as cofactor.

It localises to the cell inner membrane. The catalysed reaction is a quinone + NADH + 5 H(+)(in) = a quinol + NAD(+) + 4 H(+)(out). NDH-1 shuttles electrons from NADH, via FMN and iron-sulfur (Fe-S) centers, to quinones in the respiratory chain. The immediate electron acceptor for the enzyme in this species is believed to be ubiquinone. Couples the redox reaction to proton translocation (for every two electrons transferred, four hydrogen ions are translocated across the cytoplasmic membrane), and thus conserves the redox energy in a proton gradient. This chain is NADH-quinone oxidoreductase subunit B 2, found in Rhizobium meliloti (strain 1021) (Ensifer meliloti).